Here is a 371-residue protein sequence, read N- to C-terminus: MSL complex subunit 3B (371 aa).

Disordered stretches follow at residues 1–47 (MATL…DERA) and 160–230 (EERA…PQAK). A compositionally biased stretch (basic and acidic residues) spans 8 to 47 (PKDDGEGKDEGGSDRGDGDSKPKGKKEVEPHTRREADERA). In terms of domain architecture, MRG spans 44 to 367 (DERAMRIPIP…CEAHYSSKNP (324 aa)). Positions 183 to 193 (SESQAVAGPAA) are enriched in low complexity. Residues 206–216 (APRRSTRHSTH) are compositionally biased toward basic residues.

Its subcellular location is the nucleus. In terms of biological role, probable non-catalytic component of the MSL histone acetyltransferase complex, a multiprotein complex that mediates the majority of histone H4 acetylation at 'Lys-16' (H4K16ac), an epigenetic mark that prevents chromatin compaction. This Mus musculus (Mouse) protein is MSL complex subunit 3B.